Reading from the N-terminus, the 665-residue chain is Transketolase (665 aa).

Substrate is bound at residue His26. Thiamine diphosphate-binding positions include His66 and 114–116 (GPL). The interval 94–114 (NSKTPGHPETGETPGVETTTG) is disordered. Over residues 97–114 (TPGHPETGETPGVETTTG) the composition is skewed to low complexity. A Mg(2+)-binding site is contributed by Asp155. Residues Gly156 and Asn185 each coordinate thiamine diphosphate. Positions 185 and 187 each coordinate Mg(2+). Substrate contacts are provided by His261, Arg358, and Ser385. Residue His261 coordinates thiamine diphosphate. Glu411 acts as the Proton donor in catalysis. Residue Phe437 coordinates thiamine diphosphate. The substrate site is built by His461, Asp469, and Arg520.

The protein belongs to the transketolase family. In terms of assembly, homodimer. Mg(2+) is required as a cofactor. The cofactor is Ca(2+). Requires Mn(2+) as cofactor. Co(2+) serves as cofactor. It depends on thiamine diphosphate as a cofactor.

It catalyses the reaction D-sedoheptulose 7-phosphate + D-glyceraldehyde 3-phosphate = aldehydo-D-ribose 5-phosphate + D-xylulose 5-phosphate. Its function is as follows. Catalyzes the transfer of a two-carbon ketol group from a ketose donor to an aldose acceptor, via a covalent intermediate with the cofactor thiamine pyrophosphate. In Buchnera aphidicola subsp. Acyrthosiphon pisum (strain APS) (Acyrthosiphon pisum symbiotic bacterium), this protein is Transketolase (tkt).